The following is a 469-amino-acid chain: tRNA (cytosine(72)-C(5))-methyltransferase NSUN6 (469 aa).

The PUA domain maps to Gln111 to Tyr203. S-adenosyl-L-methionine contacts are provided by residues Cys242–Lys248, Asp266, Asp293, and Asp323. Cys373 acts as the Nucleophile in catalysis. At Lys419 the chain carries N6-acetyllysine.

It belongs to the class I-like SAM-binding methyltransferase superfamily. RsmB/NOP family.

It localises to the cytoplasm. The enzyme catalyses cytidine(72) in tRNA(Thr) + S-adenosyl-L-methionine = 5-methylcytidine(72) in tRNA(Thr) + S-adenosyl-L-homocysteine + H(+). It catalyses the reaction cytidine(72) in tRNA(Cys) + S-adenosyl-L-methionine = 5-methylcytidine(72) in tRNA(Cys) + S-adenosyl-L-homocysteine + H(+). Functionally, S-adenosyl-L-methionine-dependent methyltransferase that specifically methylates the C5 position of cytosine 72 in tRNA(Thr)(TGT) and tRNA(Cys)(GCA). In vitro also methylates tRNA(Thr)(AGT). Methylation requires, in the acceptor stem region, the presence of the 3'-CCA terminus, the target site C72, the discriminator base U73, and the second and third base pairs (2:71 and 3:70) in the tRNA substrates. In Homo sapiens (Human), this protein is tRNA (cytosine(72)-C(5))-methyltransferase NSUN6.